We begin with the raw amino-acid sequence, 373 residues long: DNA replication and repair protein RecF (373 aa).

Position 30–37 (glycine 30–threonine 37) interacts with ATP.

The protein belongs to the RecF family.

It is found in the cytoplasm. In terms of biological role, the RecF protein is involved in DNA metabolism; it is required for DNA replication and normal SOS inducibility. RecF binds preferentially to single-stranded, linear DNA. It also seems to bind ATP. This Oenococcus oeni (strain ATCC BAA-331 / PSU-1) protein is DNA replication and repair protein RecF.